Consider the following 154-residue polypeptide: Hydroperoxy fatty acid reductase Gpx2 (154 aa).

Cys-34 is a catalytic residue.

Belongs to the glutathione peroxidase family. Monomer.

It catalyses the reaction a hydroperoxy polyunsaturated fatty acid + NADPH + H(+) = a hydroxy polyunsaturated fatty acid + NADP(+) + H2O. Its activity is regulated as follows. Mercaptosuccinate, pCMB, and nethylmaleimide act as inhibitors of the catalytic activity. Functionally, hydroperoxy fatty acid reductase essential for the removal of lipid hydroperoxides under normal and stress conditions, leading to the protection of membrane integrity. The sequence is that of Hydroperoxy fatty acid reductase Gpx2 (gpx2) from Synechocystis sp. (strain ATCC 27184 / PCC 6803 / Kazusa).